A 329-amino-acid chain; its full sequence is Helicase VP6-A (329 aa).

Disordered regions lie at residues 28-130 and 189-232; these read NLVD…TNGG and DLRR…SEEP. 3 stretches are compositionally biased toward basic and acidic residues: residues 36–58, 65–83, and 96–109; these read EGGK…KDGE, GQKE…DRRI, and SGER…RGDG. K110 is a binding site for ATP. Over residues 110–129 the composition is skewed to gly residues; sequence KVGGGGGDADAGVGATGTNG. Composition is skewed to basic and acidic residues over residues 189–207 and 215–232; these read DLRR…ERGG and HGDA…SEEP.

This sequence belongs to the reoviruses VP6 family. In terms of assembly, homohexamer.

The protein resides in the virion. It carries out the reaction ATP + H2O = ADP + phosphate + H(+). ATP dependent RNA helicase essential for RNA packaging and viral transcription. Possesses ss- and dsRNA-binding capacity. The polypeptide is Helicase VP6-A (Segment-9) (Bluetongue virus 10 (isolate USA) (BTV 10)).